A 121-amino-acid chain; its full sequence is MIQRQSYLNVADNSGAKKVQMIGIPYALRQYVSVGDVVTVTVKEATPNGAAKKGKVYRAVVVRVAKELKRSDGSYIKFDDNAVILLNQYGESLGTRILGPIAREVRNRGFTKIASLAAEVV.

This sequence belongs to the universal ribosomal protein uL14 family. In terms of assembly, part of the 50S ribosomal subunit. Forms a cluster with proteins L3 and L19. In the 70S ribosome, L14 and L19 interact and together make contacts with the 16S rRNA in bridges B5 and B8.

Functionally, binds to 23S rRNA. Forms part of two intersubunit bridges in the 70S ribosome. The sequence is that of Large ribosomal subunit protein uL14 from Hydrogenobaculum sp. (strain Y04AAS1).